The following is a 299-amino-acid chain: Probable arylamine N-acetyltransferase 2 (299 aa).

Cys-75 (acyl-thioester intermediate) is an active-site residue. Catalysis depends on residues His-115 and Asp-130.

The protein belongs to the arylamine N-acetyltransferase family.

The enzyme catalyses an arylamine + acetyl-CoA = an N-acetylarylamine + CoA. In Dictyostelium discoideum (Social amoeba), this protein is Probable arylamine N-acetyltransferase 2.